A 149-amino-acid chain; its full sequence is Large ribosomal subunit protein bL9 (149 aa).

It belongs to the bacterial ribosomal protein bL9 family.

In terms of biological role, binds to the 23S rRNA. This Anaeromyxobacter dehalogenans (strain 2CP-C) protein is Large ribosomal subunit protein bL9.